We begin with the raw amino-acid sequence, 576 residues long: Trehalase 2 (576 aa).

It belongs to the glycosyl hydrolase 15 family.

It catalyses the reaction alpha,alpha-trehalose + H2O = alpha-D-glucose + beta-D-glucose. The protein operates within glycan degradation; trehalose degradation; D-glucose from alpha,alpha-trehalose: step 1/1. Functionally, catalyzes the hydrolysis of alpha,alpha-trehalose into two molecules of D-glucose. The protein is Trehalase 2 (treH2) of Sulfolobus acidocaldarius (strain ATCC 33909 / DSM 639 / JCM 8929 / NBRC 15157 / NCIMB 11770).